Reading from the N-terminus, the 115-residue chain is Promotilin (115 aa).

A signal peptide spans 1-25 (MLSRKATAILLVVHAAAMLASQTEG). A disordered region spans residues 43-73 (RYKGQKKSLSVQQRSEEVGPVDPAEPREEKQ).

This sequence belongs to the motilin family.

The protein localises to the secreted. Plays an important role in the regulation of interdigestive gastrointestinal motility and indirectly causes rhythmic contraction of duodenal and colonic smooth muscle. In Ovis aries (Sheep), this protein is Promotilin (MLN).